Here is a 288-residue protein sequence, read N- to C-terminus: Protoheme IX farnesyltransferase 2 (288 aa).

8 consecutive transmembrane segments (helical) span residues 16–36, 38–58, 88–108, 111–131, 139–159, 166–186, 227–247, and 266–286; these read IGVF…GAVP, FAPV…AGAF, LWPL…AFAA, WAAL…TVWL, IVIG…VAVP, LILA…LATA, AFFG…GWFL, and FFAS…EPLL.

Belongs to the UbiA prenyltransferase family. Protoheme IX farnesyltransferase subfamily.

It is found in the cell inner membrane. The enzyme catalyses heme b + (2E,6E)-farnesyl diphosphate + H2O = Fe(II)-heme o + diphosphate. It functions in the pathway porphyrin-containing compound metabolism; heme O biosynthesis; heme O from protoheme: step 1/1. In terms of biological role, converts heme B (protoheme IX) to heme O by substitution of the vinyl group on carbon 2 of heme B porphyrin ring with a hydroxyethyl farnesyl side group. The polypeptide is Protoheme IX farnesyltransferase 2 (Paramagnetospirillum magneticum (strain ATCC 700264 / AMB-1) (Magnetospirillum magneticum)).